A 221-amino-acid chain; its full sequence is Deoxyribose-phosphate aldolase (221 aa).

Residue Asp89 is the Proton donor/acceptor of the active site. The Schiff-base intermediate with acetaldehyde role is filled by Lys151. The Proton donor/acceptor role is filled by Lys180.

This sequence belongs to the DeoC/FbaB aldolase family. DeoC type 1 subfamily.

Its subcellular location is the cytoplasm. It carries out the reaction 2-deoxy-D-ribose 5-phosphate = D-glyceraldehyde 3-phosphate + acetaldehyde. It functions in the pathway carbohydrate degradation; 2-deoxy-D-ribose 1-phosphate degradation; D-glyceraldehyde 3-phosphate and acetaldehyde from 2-deoxy-alpha-D-ribose 1-phosphate: step 2/2. Its function is as follows. Catalyzes a reversible aldol reaction between acetaldehyde and D-glyceraldehyde 3-phosphate to generate 2-deoxy-D-ribose 5-phosphate. The protein is Deoxyribose-phosphate aldolase of Mesomycoplasma hyopneumoniae (strain J / ATCC 25934 / NCTC 10110) (Mycoplasma hyopneumoniae).